A 717-amino-acid chain; its full sequence is Delta-1-pyrroline-5-carboxylate synthase A (717 aa).

A glutamate 5-kinase region spans residues 1 to 296 (MEELDRSRAF…WAPITDSNAR (296 aa)). Ser60, Asp157, and Asn176 together coordinate substrate. ATP-binding positions include 196 to 197 (SD) and 236 to 242 (RGGMTAK). Positions 297-717 (DMAVAARESS…YTHQDIPIQA (421 aa)) are gamma-glutamyl phosphate reductase.

The protein in the N-terminal section; belongs to the glutamate 5-kinase family. It in the C-terminal section; belongs to the gamma-glutamyl phosphate reductase family.

The enzyme catalyses L-glutamate + ATP = L-glutamyl 5-phosphate + ADP. The catalysed reaction is L-glutamate 5-semialdehyde + phosphate + NADP(+) = L-glutamyl 5-phosphate + NADPH + H(+). The protein operates within amino-acid biosynthesis; L-proline biosynthesis; L-glutamate 5-semialdehyde from L-glutamate: step 1/2. Its pathway is amino-acid biosynthesis; L-proline biosynthesis; L-glutamate 5-semialdehyde from L-glutamate: step 2/2. In terms of biological role, P5CS plays a key role in proline biosynthesis, leading to osmoregulation in plants. The protein is Delta-1-pyrroline-5-carboxylate synthase A (P5CSA) of Arabidopsis thaliana (Mouse-ear cress).